A 401-amino-acid polypeptide reads, in one-letter code: Succinyl-diaminopimelate desuccinylase (401 aa).

Histidine 71 is a Zn(2+) binding site. Aspartate 73 is a catalytic residue. Aspartate 104 serves as a coordination point for Zn(2+). Glutamate 138 (proton acceptor) is an active-site residue. Zn(2+) contacts are provided by glutamate 139, glutamate 167, and histidine 352.

Belongs to the peptidase M20A family. DapE subfamily. In terms of assembly, homodimer. Zn(2+) serves as cofactor. The cofactor is Co(2+).

The enzyme catalyses N-succinyl-(2S,6S)-2,6-diaminopimelate + H2O = (2S,6S)-2,6-diaminopimelate + succinate. The protein operates within amino-acid biosynthesis; L-lysine biosynthesis via DAP pathway; LL-2,6-diaminopimelate from (S)-tetrahydrodipicolinate (succinylase route): step 3/3. Its function is as follows. Catalyzes the hydrolysis of N-succinyl-L,L-diaminopimelic acid (SDAP), forming succinate and LL-2,6-diaminopimelate (DAP), an intermediate involved in the bacterial biosynthesis of lysine and meso-diaminopimelic acid, an essential component of bacterial cell walls. The polypeptide is Succinyl-diaminopimelate desuccinylase (Wolbachia sp. subsp. Brugia malayi (strain TRS)).